Reading from the N-terminus, the 157-residue chain is 2-C-methyl-D-erythritol 2,4-cyclodiphosphate synthase (157 aa).

Residues D8 and H10 each contribute to the a divalent metal cation site. Residues 8–10 (DVH) and 34–35 (HS) each bind 4-CDP-2-C-methyl-D-erythritol 2-phosphate. A divalent metal cation is bound at residue H42. 4-CDP-2-C-methyl-D-erythritol 2-phosphate is bound by residues 56–58 (DIG), 61–65 (FPDTD), 100–106 (AQAPKMA), 132–135 (TTTE), F139, and R142.

It belongs to the IspF family. Homotrimer. A divalent metal cation is required as a cofactor.

It catalyses the reaction 4-CDP-2-C-methyl-D-erythritol 2-phosphate = 2-C-methyl-D-erythritol 2,4-cyclic diphosphate + CMP. It participates in isoprenoid biosynthesis; isopentenyl diphosphate biosynthesis via DXP pathway; isopentenyl diphosphate from 1-deoxy-D-xylulose 5-phosphate: step 4/6. Involved in the biosynthesis of isopentenyl diphosphate (IPP) and dimethylallyl diphosphate (DMAPP), two major building blocks of isoprenoid compounds. Catalyzes the conversion of 4-diphosphocytidyl-2-C-methyl-D-erythritol 2-phosphate (CDP-ME2P) to 2-C-methyl-D-erythritol 2,4-cyclodiphosphate (ME-CPP) with a corresponding release of cytidine 5-monophosphate (CMP). This is 2-C-methyl-D-erythritol 2,4-cyclodiphosphate synthase from Pseudomonas fluorescens (strain ATCC BAA-477 / NRRL B-23932 / Pf-5).